The chain runs to 1137 residues: 2'-5'-oligoadenylate synthase 3 (1137 aa).

Met-1 is subject to N-acetylmethionine. An OAS domain 1 region spans residues 6 to 341 (TPAGALDKLV…GALVQPWEGP (336 aa)). 2 interaction with dsRNA regions span residues 12–56 (DKLV…VIRI) and 185–199 (ELRK…VKLK). The linker stretch occupies residues 342–461 (GLPCAGILDL…GSQMGPDLSQ (120 aa)). Residues 434–453 (QSTASSNTPPGHSSMSTAGS) are compositionally biased toward polar residues. The disordered stretch occupies residues 434–462 (QSTASSNTPPGHSSMSTAGSQMGPDLSQI). 2 OAS domain regions span residues 462–792 (IPSK…PWDV) and 800–1134 (TPAQ…WPVK). Ser-854 contacts ATP. The Mg(2+) site is built by Asp-866, Asp-868, and Asp-938. 3 residues coordinate ATP: Arg-997, Lys-1000, and Gln-1019.

The protein belongs to the 2-5A synthase family. As to quaternary structure, monomer. Mg(2+) is required as a cofactor.

The protein localises to the cytoplasm. It is found in the nucleus. It carries out the reaction 3 ATP = 5'-triphosphoadenylyl-(2'-&gt;5')-adenylyl-(2'-&gt;5')-adenosine + 2 diphosphate. Produced as a latent enzyme which is activated by dsRNA generated during the course of viral infection. Strongly activated by long dsRNAs at least 50 nucleotides in length. ssRNA does not activate the enzyme. Its function is as follows. Interferon-induced, dsRNA-activated antiviral enzyme which plays a critical role in cellular innate antiviral response. In addition, it may also play a role in other cellular processes such as apoptosis, cell growth, differentiation and gene regulation. Synthesizes preferentially dimers of 2'-5'-oligoadenylates (2-5A) from ATP which then bind to the inactive monomeric form of ribonuclease L (RNase L) leading to its dimerization and subsequent activation. Activation of RNase L leads to degradation of cellular as well as viral RNA, resulting in the inhibition of protein synthesis, thus terminating viral replication. Can mediate the antiviral effect via the classical RNase L-dependent pathway or an alternative antiviral pathway independent of RNase L. The chain is 2'-5'-oligoadenylate synthase 3 (Oas3) from Rattus norvegicus (Rat).